Here is a 152-residue protein sequence, read N- to C-terminus: Small ribosomal subunit protein uS8m (152 aa).

This sequence belongs to the universal ribosomal protein uS8 family.

The protein resides in the mitochondrion. The chain is Small ribosomal subunit protein uS8m (mrps8) from Dictyostelium citrinum (Slime mold).